A 446-amino-acid polypeptide reads, in one-letter code: Na(+)/H(+) antiporter NhaA (446 aa).

The next 11 membrane-spanning stretches (helical) occupy residues 23–43 (GGMLLMGVVLLAMFLANSPWG), 73–93 (LMTFINDALMAVFFFSVGLEI), 109–129 (LLPIVAACGGMLVPVLIYYFM), 138–158 (GLAIPMATDIAFSLGVLSLFG), 167–187 (VFLTAFAVVDDIGGILVIALF), 193–213 (SVNYLIASAGILLILCGGNFF), 219–239 (WFYIFWGVIMWYLFLQSGIHA), 314–334 (MVNYIILPLFAFANAGVSLTA), 348–368 (VLAGLLAGKFAGIYFFTWLVI), 381–401 (WVNLTGICLLGGIGFTVSLFI), and 419–439 (GVILGTVLAGVLAYLVLQFAL).

Belongs to the NhaA Na(+)/H(+) (TC 2.A.33) antiporter family.

The protein resides in the cell inner membrane. It carries out the reaction Na(+)(in) + 2 H(+)(out) = Na(+)(out) + 2 H(+)(in). In terms of biological role, na(+)/H(+) antiporter that extrudes sodium in exchange for external protons. The chain is Na(+)/H(+) antiporter NhaA from Phocaeicola vulgatus (strain ATCC 8482 / DSM 1447 / JCM 5826 / CCUG 4940 / NBRC 14291 / NCTC 11154) (Bacteroides vulgatus).